Reading from the N-terminus, the 525-residue chain is Endoglucanase 10 (525 aa).

The first 26 residues, Met1–Ala26, serve as a signal peptide directing secretion. The active-site Nucleophile is the Asp109. An N-linked (GlcNAc...) asparagine glycan is attached at Asn259. The active site involves His442. 2 N-linked (GlcNAc...) asparagine glycosylation sites follow: Asn464 and Asn484. Residues Asp489 and Glu498 contribute to the active site.

This sequence belongs to the glycosyl hydrolase 9 (cellulase E) family.

The protein resides in the secreted. The enzyme catalyses Endohydrolysis of (1-&gt;4)-beta-D-glucosidic linkages in cellulose, lichenin and cereal beta-D-glucans.. In Arabidopsis thaliana (Mouse-ear cress), this protein is Endoglucanase 10.